The sequence spans 811 residues: Elongation factor G, mitochondrial (811 aa).

The transit peptide at 1-64 directs the protein to the mitochondrion; the sequence is MSAIARAAAR…FQQSFQRRWA (64 aa). In terms of domain architecture, tr-type G spans 96–394; sequence RRQRNVGISA…GVCAYLPNPS (299 aa). Residues 105 to 112, 192 to 196, and 246 to 249 contribute to the GTP site; these read AHIDSGKT, DTPGH, and NKMD.

The protein belongs to the TRAFAC class translation factor GTPase superfamily. Classic translation factor GTPase family. EF-G/EF-2 subfamily.

The protein resides in the mitochondrion. It participates in protein biosynthesis; polypeptide chain elongation. Its function is as follows. Mitochondrial GTPase that catalyzes the GTP-dependent ribosomal translocation step during translation elongation. During this step, the ribosome changes from the pre-translocational (PRE) to the post-translocational (POST) state as the newly formed A-site-bound peptidyl-tRNA and P-site-bound deacylated tRNA move to the P and E sites, respectively. Catalyzes the coordinated movement of the two tRNA molecules, the mRNA and conformational changes in the ribosome. This Cryptococcus neoformans var. neoformans serotype D (strain B-3501A) (Filobasidiella neoformans) protein is Elongation factor G, mitochondrial.